We begin with the raw amino-acid sequence, 148 residues long: Arginine repressor (148 aa).

Belongs to the ArgR family.

The protein resides in the cytoplasm. It functions in the pathway amino-acid biosynthesis; L-arginine biosynthesis [regulation]. Its function is as follows. Regulates arginine biosynthesis genes. The sequence is that of Arginine repressor from Chlorobium phaeovibrioides (strain DSM 265 / 1930) (Prosthecochloris vibrioformis (strain DSM 265)).